The sequence spans 200 residues: Serine/arginine-rich splicing factor RSZ22 (200 aa).

Positions 2–71 (SRVYVGNLDP…NGWRVEQSHN (70 aa)) constitute an RRM domain. Basic and acidic residues predominate over residues 62 to 83 (NGWRVEQSHNRGERGGGGRGGD). Disordered stretches follow at residues 62 to 97 (NGWRVEQSHNRGERGGGGRGGDRGGGGGGRGGRGGS) and 112 to 200 (RECR…RSRS). Positions 84 to 96 (RGGGGGGRGGRGG) are enriched in gly residues. The segment at 99-116 (LKCYECGETGHFARECRN) adopts a CCHC-type zinc-finger fold. Residues 120-137 (TGRRRSKSRSRTPPRYRR) show a composition bias toward basic residues. Residues serine 138, serine 147, serine 152, serine 160, serine 162, serine 174, and serine 200 each carry the phosphoserine modification. Residues 138–150 (SPSYGRRSYSPRA) show a composition bias toward low complexity. The span at 151–166 (RSPPPPRRRSPSPPPA) shows a compositional bias: pro residues.

Belongs to the splicing factor SR family. RSZ subfamily. As to quaternary structure, component of the spliceosome. Interacts with AFC2, RS2Z33 and RNU1. In terms of processing, extensively phosphorylated on serine residues in the RS domain. Phosphorylated by AFC2. As to expression, expressed in primary and lateral roots, stems, petioles, abaxial and adaxial epidermis cells, trichomes, unopened flowers, anther filaments, anthers, stigma, pollen, pollen tube, ovule funiculi, integuments, embryo sac and developing seeds.

It is found in the nucleus speckle. It localises to the nucleus. The protein resides in the nucleolus. Its subcellular location is the nucleoplasm. The protein localises to the cytoplasm. In terms of biological role, sequence-specific RNA-binding protein probably involved in pre-mRNA splicing. In vitro, can complement efficiently splicing-deficient mammalian SRSF7-depleted HeLa cell extract. The chain is Serine/arginine-rich splicing factor RSZ22 (RSZ22) from Arabidopsis thaliana (Mouse-ear cress).